Reading from the N-terminus, the 150-residue chain is Large ribosomal subunit protein bL9 (150 aa).

Belongs to the bacterial ribosomal protein bL9 family.

In terms of biological role, binds to the 23S rRNA. This Polynucleobacter necessarius subsp. necessarius (strain STIR1) protein is Large ribosomal subunit protein bL9.